A 461-amino-acid chain; its full sequence is Transcriptional activator RocR (461 aa).

Aspartate 57 bears the 4-aspartylphosphate mark. Positions 143 to 372 (ILGTSPAIQD…EHMIEGAMNF (230 aa)) constitute a Sigma-54 factor interaction domain. ATP is bound by residues 171-178 (GETGTGKE) and 233-242 (AHGGTLLLDE). Residues 434 to 453 (ISKAAQELGISRQSLQYRLK) constitute a DNA-binding region (H-T-H motif).

Its function is as follows. Positive regulator of arginine catabolism. Controls the transcription of the two operons rocABC and rocDEF and probably acts by binding to the corresponding upstream activating sequences. The polypeptide is Transcriptional activator RocR (rocR) (Bacillus subtilis (strain 168)).